We begin with the raw amino-acid sequence, 122 residues long: Small ribosomal subunit protein uS13 (122 aa).

The disordered stretch occupies residues 95 to 122 (GLPVRGQKTKTNARTRKGPKRTVANKKK).

Belongs to the universal ribosomal protein uS13 family. As to quaternary structure, part of the 30S ribosomal subunit. Forms a loose heterodimer with protein S19. Forms two bridges to the 50S subunit in the 70S ribosome.

Functionally, located at the top of the head of the 30S subunit, it contacts several helices of the 16S rRNA. In the 70S ribosome it contacts the 23S rRNA (bridge B1a) and protein L5 of the 50S subunit (bridge B1b), connecting the 2 subunits; these bridges are implicated in subunit movement. Contacts the tRNAs in the A and P-sites. This chain is Small ribosomal subunit protein uS13, found in Lachnoclostridium phytofermentans (strain ATCC 700394 / DSM 18823 / ISDg) (Clostridium phytofermentans).